The following is a 411-amino-acid chain: MPRLLEELTAVILTHRDAPLDVVGSFESRVGEAYQILRGVVDEAVVLATCNRFEVYALPRRGFVETVIGFLGEASRYARILHGMDVVRHLFRVAAGLESAIIGENEILGQVARAYEEARRRGVAGKYLGLLFSQAVRTGKLVRSRTRISYGNVGAPGAAVKLAREAAGGFDGKHVVVVGAGEAGSIMASLVREEAPTARISIVNRSVDRARELAGKVRGEAYGLDMLPKLLAAADVVLVAVTVNEPVIKRSMLEDVGRHLVVVDISNPPAVEQPIPSNVYYAGLRDVEKVIKEVLAVRIREVPKAEAIVEEQVALLRKLWLKRGADEAIAEIMRYANRVMEEEVEELVSRLRGLGVDGAALLVARSFAYSLTKKLLRPLILYAHEAALEGSLSKLEEIAQKYRDELARRQH.

Residues 49–52 (TCNR), serine 99, 104–106 (ENE), and glutamine 110 contribute to the substrate site. Cysteine 50 acts as the Nucleophile in catalysis. Residue 179–184 (GAGEAG) participates in NADP(+) binding.

The protein belongs to the glutamyl-tRNA reductase family. As to quaternary structure, homodimer.

The enzyme catalyses (S)-4-amino-5-oxopentanoate + tRNA(Glu) + NADP(+) = L-glutamyl-tRNA(Glu) + NADPH + H(+). The protein operates within porphyrin-containing compound metabolism; protoporphyrin-IX biosynthesis; 5-aminolevulinate from L-glutamyl-tRNA(Glu): step 1/2. Functionally, catalyzes the NADPH-dependent reduction of glutamyl-tRNA(Glu) to glutamate 1-semialdehyde (GSA). The protein is Glutamyl-tRNA reductase of Hyperthermus butylicus (strain DSM 5456 / JCM 9403 / PLM1-5).